We begin with the raw amino-acid sequence, 425 residues long: Orexin/Hypocretin receptor type 1 (425 aa).

The tract at residues Met1–Pro25 is disordered. Over Met1–Glu46 the chain is Extracellular. The required for response to orexin-A stretch occupies residues Asp26–Tyr41. The helical transmembrane segment at Trp47–Val67 threads the bilayer. The Cytoplasmic portion of the chain corresponds to Cys68–Asn82. A helical membrane pass occupies residues Tyr83–Leu105. At Val106 to Cys119 the chain is on the extracellular side. Cys119 and Cys202 form a disulfide bridge. The helical transmembrane segment at Lys120–Ile140 threads the bilayer. The Cytoplasmic segment spans residues Ala141–Arg160. A helical transmembrane segment spans residues Ala161–Val182. The Extracellular segment spans residues Met183 to Lys213. N-linked (GlcNAc...) asparagine glycosylation is present at Asn194. The helical transmembrane segment at Ile214–Tyr235 threads the bilayer. Residues Phe236–Lys298 are Cytoplasmic-facing. Residues Met299 to Lys321 traverse the membrane as a helical segment. Residues Arg322–Val336 are Extracellular-facing. The helical transmembrane segment at Tyr337–Phe360 threads the bilayer. Over Leu361–Pro425 the chain is Cytoplasmic.

It belongs to the G-protein coupled receptor 1 family.

The protein resides in the cell membrane. In terms of biological role, moderately selective excitatory receptor for orexin-A and, with a lower affinity, for orexin-B neuropeptide. Triggers an increase in cytoplasmic Ca(2+) levels in response to orexin-A binding. In Bos taurus (Bovine), this protein is Orexin/Hypocretin receptor type 1.